Consider the following 43-residue polypeptide: Protein PsbN (43 aa).

The chain crosses the membrane as a helical span at residues 5–27; it reads TLVTISISCLLVSFTGYAIYTSF.

The protein belongs to the PsbN family.

The protein localises to the plastid. It localises to the chloroplast thylakoid membrane. In terms of biological role, may play a role in photosystem I and II biogenesis. The sequence is that of Protein PsbN from Welwitschia mirabilis (Tree tumbo).